We begin with the raw amino-acid sequence, 271 residues long: Protein FAM110D (271 aa).

Disordered regions lie at residues 1 to 83 (MLLA…RPDS), 116 to 145 (PRDA…APEA), and 186 to 245 (PQSW…PVSV). The segment covering 68–78 (RPVRRGSGRRL) has biased composition (basic residues). Positions 116–126 (PRDAAPSSPAS) are enriched in low complexity. Residues 220–231 (SPGGAGGGGGSE) show a composition bias toward gly residues.

Belongs to the FAM110 family.

The protein is Protein FAM110D (FAM110D) of Homo sapiens (Human).